The following is a 941-amino-acid chain: Protocadherin alpha-12 (941 aa).

Positions 1 to 29 (MVIIGPRGPGSQRLLLSLLLLAAWEVGSG) are cleaved as a signal peptide. Cadherin domains are found at residues 30 to 133 (QLHY…PPVF), 134 to 242 (RERE…GPAF), 243 to 350 (DKPS…VPEV), 351 to 455 (MVTS…APAF), 456 to 565 (AQPE…APAL), and 581 to 678 (VPRS…APKT). The Extracellular segment spans residues 30 to 697 (QLHYSVYEEA…DPEAALVDIN (668 aa)). N257 and N265 each carry an N-linked (GlcNAc...) asparagine glycan. N-linked (GlcNAc...) asparagine glycosylation is present at N548. A helical transmembrane segment spans residues 698-718 (VYLIIAICAVSSLLVLTLLLY). The Cytoplasmic portion of the chain corresponds to 719-941 (TALRCSAPPT…GNSTTDNSDQ (223 aa)). PXXP repeat units follow at residues 734–737 (PGKP), 790–793 (PRQP), 823–826 (PGGP), 863–866 (GPGN), and 882–885 (PGSP). The segment at 734–885 (PGKPTLVCSS…PDKFIIPGSP (152 aa)) is 5 X 4 AA repeats of P-X-X-P. The tract at residues 818–941 (ILRAGPGGPD…GNSTTDNSDQ (124 aa)) is disordered. Positions 900–914 (DKSDFITFGKKEETK) are enriched in basic and acidic residues.

Its subcellular location is the cell membrane. In terms of biological role, potential calcium-dependent cell-adhesion protein. May be involved in the establishment and maintenance of specific neuronal connections in the brain. The protein is Protocadherin alpha-12 (PCDHA12) of Homo sapiens (Human).